A 600-amino-acid chain; its full sequence is FERM domain-containing protein 3 (600 aa).

The FERM domain occupies 31–311 (MRCTIRLLDD…ENQAFYKYAK (281 aa)). A disordered region spans residues 413-440 (SAPVLGNSPARGLETTADVTHDEEESIR). A helical membrane pass occupies residues 534-554 (LLLAAIGLLMVVLPLLLILLE).

It is found in the membrane. This is FERM domain-containing protein 3 (frmd3) from Xenopus tropicalis (Western clawed frog).